Here is a 141-residue protein sequence, read N- to C-terminus: ATP synthase F(0) complex subunit C2, mitochondrial (141 aa).

Residues 1–66 (MFSCFKFIST…RNFQTSAISR (66 aa)) constitute a mitochondrion transit peptide. The helical transmembrane segment at 82–102 (VGVAGSGAGIGTVFGSLIIGY) threads the bilayer. An N6,N6,N6-trimethyllysine modification is found at Lys-109. Residues 117–137 (ILGFALSEAMGLFCLMVAFLI) form a helical membrane-spanning segment.

It belongs to the ATPase C chain family. In terms of assembly, F-type ATPases have 2 components, CF(1) - the catalytic core - and CF(0) - the membrane proton channel. CF(1) has five subunits: alpha(3), beta(3), gamma(1), delta(1), epsilon(1). CF(0) has three main subunits: a, b and c. Interacts with DNAJC30; interaction is direct. In terms of processing, trimethylated by ATPSCKMT at Lys-109. Methylation is required for proper incorporation of the C subunit into the ATP synthase complex and mitochondrial respiration.

The protein localises to the mitochondrion membrane. In terms of biological role, mitochondrial membrane ATP synthase (F(1)F(0) ATP synthase or Complex V) produces ATP from ADP in the presence of a proton gradient across the membrane which is generated by electron transport complexes of the respiratory chain. F-type ATPases consist of two structural domains, F(1) - containing the extramembraneous catalytic core and F(0) - containing the membrane proton channel, linked together by a central stalk and a peripheral stalk. During catalysis, ATP synthesis in the catalytic domain of F(1) is coupled via a rotary mechanism of the central stalk subunits to proton translocation. Part of the complex F(0) domain. A homomeric c-ring of probably 10 subunits is part of the complex rotary element. The chain is ATP synthase F(0) complex subunit C2, mitochondrial from Pongo abelii (Sumatran orangutan).